The sequence spans 434 residues: Evolutionarily conserved signaling intermediate in Toll pathway, mitochondrial (434 aa).

A mitochondrion-targeting transit peptide spans 1 to 48 (MSWVQVNLLARGLSRGWGSICRTVLSGTPFAQPSLQARGLHCSAVTHK). A Glycyl lysine isopeptide (Lys-Gly) (interchain with G-Cter in ubiquitin) cross-link involves residue Lys371. The disordered stretch occupies residues 403 to 434 (TRLEGQSPPHSPPKGPEEDDEAIQAQQRQGQS).

The protein belongs to the ECSIT family. Interacts with MAP3K1, SMAD4 and TRAF6. Interacts with SMAD1 only after BMP4-treatment. Part of the mitochondrial complex I assembly/MCIA complex that comprises at least the core subunits TMEM126B, NDUFAF1, ECSIT and ACAD9 and complement subunits such as COA1 and TMEM186. Interacts with NDUFAF1. Interacts with ACAD9. Interacts with TRIM59. Interacts with TMEM70 and TMEM242. Interacts (when ubiquitinated) with NF-kappa-B subunits RELA and NFKB1. Interacts with RIGI, IFIT1 and MAVS; these interactions promote RLR-mediated type I IFN induction. Interacts with SQSTM1; this interaction inhibits TLR4 signaling via functional regulation of the TRAF6-ECSIT complex. Interacts with cereblon/CRBN; this interaction inhibits the ubiquitination of ECSIT. In terms of processing, ubiquitinated on Lys-371; leading to translocation in the nucleus together with RELA and NFKB1 and expression of NF-kappa-B-dependent genes.

It localises to the cytoplasm. The protein resides in the nucleus. It is found in the mitochondrion. Its function is as follows. Adapter protein that plays a role in different signaling pathways including TLRs and IL-1 pathways or innate antiviral induction signaling. Plays a role in the activation of NF-kappa-B by forming a signal complex with TRAF6 and TAK1/MAP3K7 to activate TAK1/MAP3K7 leading to activation of IKKs. Once ubiquitinated, interacts with the dissociated RELA and NFKB1 proteins and translocates to the nucleus where it induces NF-kappa-B-dependent gene expression. Plays a role in innate antiviral immune response by bridging the pattern recognition receptors RIGI and MDA5/IFIT1 to the MAVS complex at the mitochondrion. Promotes proteolytic activation of MAP3K1. Involved in the BMP signaling pathway. Required for normal embryonic development. As part of the MCIA complex, involved in the assembly of the mitochondrial complex I. The protein is Evolutionarily conserved signaling intermediate in Toll pathway, mitochondrial of Rattus norvegicus (Rat).